We begin with the raw amino-acid sequence, 407 residues long: Na(+)-translocating NADH-quinone reductase subunit F (407 aa).

The helical transmembrane segment at 3 to 23 (IILGVVMFTLIVLALTVMILF) threads the bilayer. The region spanning 32–126 (GDITVEINED…NLKIELPEEI (95 aa)) is the 2Fe-2S ferredoxin-type domain. Residues Cys69, Cys75, Cys78, and Cys110 each coordinate [2Fe-2S] cluster. Residues 129-269 (VKKWTCEVIS…SGPFGEFFAK (141 aa)) form the FAD-binding FR-type domain.

The protein belongs to the NqrF family. Composed of six subunits; NqrA, NqrB, NqrC, NqrD, NqrE and NqrF. It depends on [2Fe-2S] cluster as a cofactor. FAD serves as cofactor.

The protein resides in the cell inner membrane. It carries out the reaction a ubiquinone + n Na(+)(in) + NADH + H(+) = a ubiquinol + n Na(+)(out) + NAD(+). Its function is as follows. NQR complex catalyzes the reduction of ubiquinone-1 to ubiquinol by two successive reactions, coupled with the transport of Na(+) ions from the cytoplasm to the periplasm. The first step is catalyzed by NqrF, which accepts electrons from NADH and reduces ubiquinone-1 to ubisemiquinone by a one-electron transfer pathway. The polypeptide is Na(+)-translocating NADH-quinone reductase subunit F (Yersinia pseudotuberculosis serotype I (strain IP32953)).